We begin with the raw amino-acid sequence, 363 residues long: Protein-arginine kinase (363 aa).

A Phosphagen kinase C-terminal domain is found at 24–255; it reads IVLSSRIRLA…QQLIAQERAA (232 aa). Residues 27–31, H92, R126, 177–181, and 208–213 each bind ATP; these read SSRIR, RASVM, and RGTYGE. Residues 338 to 343 carry the RDXXRA motif of the pArg binding pocket involved in allosteric regulation motif; sequence RDVRRA.

The protein belongs to the ATP:guanido phosphotransferase family.

It carries out the reaction L-arginyl-[protein] + ATP = N(omega)-phospho-L-arginyl-[protein] + ADP + H(+). Appears to be allosterically activated by the binding of pArg-containing polypeptides to the pArg-binding pocket localized in the C-terminal domain of McsB. Catalyzes the specific phosphorylation of arginine residues in a large number of proteins. Is part of the bacterial stress response system. Protein arginine phosphorylation has a physiologically important role and is involved in the regulation of many critical cellular processes, such as protein homeostasis, motility, competence, and stringent and stress responses, by regulating gene expression and protein activity. The sequence is that of Protein-arginine kinase from Geobacillus kaustophilus (strain HTA426).